A 257-amino-acid polypeptide reads, in one-letter code: MAMTLPYLIQAKQQGRPLVALTAWDYAIAQLLDGAGVDIILVGDSLAMVALGHRTTLPITLDEMIHHAKAVCRGVKQSLVVCDLPFLSYQESISQAIRSAGRVLKETGAQGVKLEGGHAVAVETVQQLTSIGIPVMGHVGLTPQSVHRLGYRQQGQTEIDAERIISEAIALENAGVFALVLEHIPINLAATITSKLSIPTIGIGAGPHCDGQVLVTADLLGLSKKQPPFAKSYLNLRGLITEAVNEFSREVREGEFP.

Mg(2+) is bound by residues D44 and D83. 3-methyl-2-oxobutanoate is bound by residues D44–S45, D83, and K113. Position 115 (E115) interacts with Mg(2+). The active-site Proton acceptor is the E182.

The protein belongs to the PanB family. Homodecamer; pentamer of dimers. The cofactor is Mg(2+).

It is found in the cytoplasm. It carries out the reaction 3-methyl-2-oxobutanoate + (6R)-5,10-methylene-5,6,7,8-tetrahydrofolate + H2O = 2-dehydropantoate + (6S)-5,6,7,8-tetrahydrofolate. It functions in the pathway cofactor biosynthesis; (R)-pantothenate biosynthesis; (R)-pantoate from 3-methyl-2-oxobutanoate: step 1/2. Functionally, catalyzes the reversible reaction in which hydroxymethyl group from 5,10-methylenetetrahydrofolate is transferred onto alpha-ketoisovalerate to form ketopantoate. This Rippkaea orientalis (strain PCC 8801 / RF-1) (Cyanothece sp. (strain PCC 8801)) protein is 3-methyl-2-oxobutanoate hydroxymethyltransferase.